Consider the following 135-residue polypeptide: D-ribose pyranase (135 aa).

His20 functions as the Proton donor in the catalytic mechanism. Residues Asp28, His102, and 124–126 contribute to the substrate site; that span reads YSN.

It belongs to the RbsD / FucU family. RbsD subfamily. Homodecamer.

The protein localises to the cytoplasm. It catalyses the reaction beta-D-ribopyranose = beta-D-ribofuranose. The protein operates within carbohydrate metabolism; D-ribose degradation; D-ribose 5-phosphate from beta-D-ribopyranose: step 1/2. Functionally, catalyzes the interconversion of beta-pyran and beta-furan forms of D-ribose. The polypeptide is D-ribose pyranase (Thermotoga petrophila (strain ATCC BAA-488 / DSM 13995 / JCM 10881 / RKU-1)).